A 153-amino-acid chain; its full sequence is Endoribonuclease YbeY (153 aa).

Residues His116, His120, and His126 each coordinate Zn(2+).

This sequence belongs to the endoribonuclease YbeY family. Zn(2+) serves as cofactor.

The protein resides in the cytoplasm. Functionally, single strand-specific metallo-endoribonuclease involved in late-stage 70S ribosome quality control and in maturation of the 3' terminus of the 16S rRNA. In Clavibacter michiganensis subsp. michiganensis (strain NCPPB 382), this protein is Endoribonuclease YbeY.